We begin with the raw amino-acid sequence, 143 residues long: DKGPGFVVTGRVYCDPCRAGFETNVSHNVQGATVAVDCRPFNGGESKLKAEATTDGLGWYKIEIDQDHQEEICEVVLAKSPDTTCSEIEEFRDRARVPLTSNNGIKQQGIRYANPIAFFRKEPLKECGGILQAYDLRDAPETP.

3 disulfide bridges follow: Cys14/Cys85, Cys17/Cys127, and Cys38/Cys73. A glycan (N-linked (GlcNAc...) asparagine) is linked at Asn24.

This sequence belongs to the Ole e I family.

Its subcellular location is the secreted. The polypeptide is Pollen allergen Phl p 11 (Phleum pratense (Common timothy)).